Here is a 382-residue protein sequence, read N- to C-terminus: SPRY domain-containing protein C285.10c (382 aa).

Residues 21 to 41 traverse the membrane as a helical segment; sequence LAILFIFIALAAVIVLLICLL. In terms of domain architecture, B30.2/SPRY spans 79–284; the sequence is GFSLLDDMGK…LHVNLGQAGY (206 aa). A disordered region spans residues 304 to 382; the sequence is APPPSYSTSQ…MHSMPATDEV (79 aa). Polar residues-rich tracts occupy residues 309-334 and 361-372; these read YSTS…QGDT and FSPSSSNNQAYQ.

The protein localises to the cytoplasm. The protein resides in the membrane. The sequence is that of SPRY domain-containing protein C285.10c from Schizosaccharomyces pombe (strain 972 / ATCC 24843) (Fission yeast).